Consider the following 1029-residue polypeptide: Eukaryotic translation initiation factor 3 subunit A (1029 aa).

Positions Leu-92–Ala-121 form a coiled coil. One can recognise a PCI domain in the interval Met-339–Phe-523. Residues Thr-606–Ala-903 adopt a coiled-coil conformation. 4 stretches are compositionally biased toward basic and acidic residues: residues Ala-621 to Arg-632, Glu-644 to Arg-666, Thr-797 to Arg-901, and Gly-913 to Ala-924. Disordered stretches follow at residues Ala-621–Arg-666 and Thr-797–Gln-1029. Over residues Ala-943–Thr-960 the composition is skewed to low complexity. A compositionally biased stretch (basic and acidic residues) spans Ala-977–Glu-993.

Belongs to the eIF-3 subunit A family. As to quaternary structure, component of the eukaryotic translation initiation factor 3 (eIF-3) complex.

Its subcellular location is the cytoplasm. In terms of biological role, RNA-binding component of the eukaryotic translation initiation factor 3 (eIF-3) complex, which is involved in protein synthesis of a specialized repertoire of mRNAs and, together with other initiation factors, stimulates binding of mRNA and methionyl-tRNAi to the 40S ribosome. The eIF-3 complex specifically targets and initiates translation of a subset of mRNAs involved in cell proliferation. The chain is Eukaryotic translation initiation factor 3 subunit A from Coccidioides immitis (strain RS) (Valley fever fungus).